The following is a 101-amino-acid chain: uncharacterized protein (101 aa).

A signal peptide spans 1 to 24 (MILMFRMNKGMSFITLLFSLALFS).

This is an uncharacterized protein from Haemophilus influenzae (strain ATCC 51907 / DSM 11121 / KW20 / Rd).